A 271-amino-acid polypeptide reads, in one-letter code: Cytosolic Fe-S cluster assembly factor NUBP2 (271 aa).

Methionine 1 is modified (N-acetylmethionine). 22–29 (GKGGVGKS) provides a ligand contact to ATP. 2 residues coordinate [4Fe-4S] cluster: cysteine 196 and cysteine 199.

Belongs to the Mrp/NBP35 ATP-binding proteins family. NUBP2/CFD1 subfamily. Heterotetramer of 2 NUBP1 and 2 NUBP2 chains. Interacts with KIFC1. Interacts with NUBP1. The cofactor is [4Fe-4S] cluster.

It localises to the nucleus. Its subcellular location is the cytoplasm. It is found in the cytoskeleton. The protein resides in the microtubule organizing center. The protein localises to the centrosome. It localises to the cilium axoneme. Its subcellular location is the centriole. Functionally, component of the cytosolic iron-sulfur (Fe/S) protein assembly (CIA) machinery. Required for maturation of extramitochondrial Fe-S proteins. The NUBP1-NUBP2 heterotetramer forms a Fe-S scaffold complex, mediating the de novo assembly of an Fe-S cluster and its transfer to target apoproteins. Negatively regulates cilium formation and structure. The chain is Cytosolic Fe-S cluster assembly factor NUBP2 from Bos taurus (Bovine).